A 328-amino-acid chain; its full sequence is Organic solute transporter alpha-like protein (328 aa).

The Extracellular portion of the chain corresponds to 1–44; that stretch reads MNASENYFTMDPTENISQVLDQNRNNTNSLRTHPTVEEYYENMT. Asn-2, Asn-15, Asn-25, and Asn-42 each carry an N-linked (GlcNAc...) asparagine glycan. Residues 45 to 65 form a helical membrane-spanning segment; that stretch reads AFLSLAIFIASLLTILNISIF. Residues 66–84 are Cytoplasmic-facing; that stretch reads ATTVSRLRRHLDKPLLGPS. A helical membrane pass occupies residues 85 to 105; sequence IMMVGLYPIISVAALVTILVP. Position 106 (Tyr-106) is a topological domain, extracellular. A helical membrane pass occupies residues 107–127; the sequence is SWFICHTVMHVMFMVGGPVFR. At 128–177 the chain is on the cytoplasmic side; that stretch reads TLLFRYVGSEQNYVKETAGEAVQLNTPPCCCCCLCLPMVIPTKAKLCISR. A helical membrane pass occupies residues 178-198; it reads YMVWQMPFWQGSIMLVMNILY. Topologically, residues 199–208 are extracellular; the sequence is YRDIQLYRQV. A helical transmembrane segment spans residues 209–229; sequence MFFFIPFIVCSIVLGAWSLQI. At 230–247 the chain is on the cytoplasmic side; it reads TVRMITKVRGDYQLRKKM. Residues 248 to 265 traverse the membrane as a helical segment; the sequence is FCLQLVVMLCKLQYLVLY. Residues 266 to 287 are Extracellular-facing; that stretch reads DQLDGIKMGGEYPINHTVYKQT. Residue Asn-280 is glycosylated (N-linked (GlcNAc...) asparagine). The helical transmembrane segment at 288 to 308 threads the bilayer; that stretch reads IINILILVEMVLVSMMVQSAY. Residues 309–328 lie on the Cytoplasmic side of the membrane; the sequence is RTPVQVQIDEVNKEKEVTRI.

This sequence belongs to the OST-alpha family.

It localises to the cell membrane. Its function is as follows. Probable transporter. In Drosophila melanogaster (Fruit fly), this protein is Organic solute transporter alpha-like protein.